Here is a 127-residue protein sequence, read N- to C-terminus: MGKARGVNSGGGESSLGYLFGSGESVPKPNKPNAKTGFTTTTTTTTTTDGAGGRPKTTTTTTTTGDKNKTEENSAGVRGSPNNYYRSDGQNCGNFLTERPSTKVHAAPGGGSSLGYLFGSGPCGSDK.

The disordered stretch occupies residues 1–127 (MGKARGVNSG…FGSGPCGSDK (127 aa)). Low complexity predominate over residues 39–48 (TTTTTTTTTT). Ser-80 carries the phosphoserine modification. A compositionally biased stretch (polar residues) spans 80 to 94 (SPNNYYRSDGQNCGN).

The protein belongs to the SPIRAL1 family. Ubiquitous.

Its function is as follows. Acts redundantly with SPR1 in maintaining the cortical microtubules organization essential for anisotropic cell growth. The protein is Protein SPIRAL1-like 4 (SP1L4) of Arabidopsis thaliana (Mouse-ear cress).